The chain runs to 743 residues: tRNA(Met) cytidine acetyltransferase TmcA (743 aa).

Residues Q216, 241–250, and R390 contribute to the ATP site; that span reads GRGKSASIGL. The N-acetyltransferase domain occupies 420–604; that stretch reads LKIEDVSQEE…YSVIVIRALS (185 aa). Residues 531–533 and 538–544 each bind acetyl-CoA; these read IAV and QGKGIGS.

The protein belongs to the RNA cytidine acetyltransferase family. TmcA subfamily.

It localises to the cytoplasm. It carries out the reaction cytidine(34) in elongator tRNA(Met) + acetyl-CoA + ATP + H2O = N(4)-acetylcytidine(34) in elongator tRNA(Met) + ADP + phosphate + CoA + H(+). Functionally, catalyzes the formation of N(4)-acetylcytidine (ac(4)C) at the wobble position of tRNA(Met), by using acetyl-CoA as an acetyl donor and ATP (or GTP). The protein is tRNA(Met) cytidine acetyltransferase TmcA of Saccharolobus islandicus (strain Y.G.57.14 / Yellowstone #1) (Sulfolobus islandicus).